The chain runs to 735 residues: Muskelin (735 aa).

A2 is subject to N-acetylalanine. The 33-residue stretch at 172-204 (REQEAIRLCLKHFRQHNYTEAFESLQKKTKIAL) folds into the LisH domain. Residues 206 to 258 (HPMLTDMHDKLVLKGDFDACEELIEKAVNDGLFNQYISQQEYKPRWSQIIPKS) enclose the CTLH domain. Kelch repeat units lie at residues 284–330 (TVYL…SCHK), 339–391 (QIYT…FDHQ), 400–458 (MIYT…SRIG), 469–515 (CLYV…TGFT), 526–578 (EIHV…SLQE), and 597–651 (VHYL…AQMD).

In terms of assembly, homodimer; may form higher oligomers. Identified in the CTLH complex that contains GID4, RANBP9 and/or RANBP10, MKLN1, MAEA, RMND5A (or alternatively its paralog RMND5B), GID8, ARMC8, WDR26 and YPEL5. Within this complex, MAEA, RMND5A (or alternatively its paralog RMND5B), GID8, WDR26, and RANBP9 and/or RANBP10 form the catalytic core, while GID4, MKLN1, ARMC8 and YPEL5 have ancillary roles. Interacts with RANBP9. Part of a complex consisting of RANBP9, MKLN1 and GID8. Interacts with GABRA1. Interacts with the C-terminal tail of PTGER3.

Its subcellular location is the cytoplasm. The protein localises to the cell projection. It is found in the ruffle. It localises to the cell cortex. The protein resides in the synapse. Its subcellular location is the postsynapse. Component of the CTLH E3 ubiquitin-protein ligase complex that selectively accepts ubiquitin from UBE2H and mediates ubiquitination and subsequent proteasomal degradation of the transcription factor HBP1. Required for internalization of the GABA receptor GABRA1 from the cell membrane via endosomes and subsequent GABRA1 degradation. Acts as a mediator of cell spreading and cytoskeletal responses to the extracellular matrix component THBS1. This Rattus norvegicus (Rat) protein is Muskelin (Mkln1).